The chain runs to 101 residues: Small ribosomal subunit protein uS14A (101 aa).

Disordered stretches follow at residues 1–20 (MAKKSKIAKNDRRQETVARY) and 28–72 (TEII…RPRG). 2 stretches are compositionally biased toward basic and acidic residues: residues 38-53 (EAERRAAQQELRRQPR) and 61-70 (RNRDSVDGRP).

This sequence belongs to the universal ribosomal protein uS14 family. In terms of assembly, part of the 30S ribosomal subunit. Contacts proteins S3 and S10.

Functionally, binds 16S rRNA, required for the assembly of 30S particles and may also be responsible for determining the conformation of the 16S rRNA at the A site. This Streptomyces avermitilis (strain ATCC 31267 / DSM 46492 / JCM 5070 / NBRC 14893 / NCIMB 12804 / NRRL 8165 / MA-4680) protein is Small ribosomal subunit protein uS14A.